A 226-amino-acid chain; its full sequence is Small ribosomal subunit protein uS3 (226 aa).

Positions 39–107 (VRNFIRKKLA…PVHINIEEIR (69 aa)) constitute a KH type-2 domain.

The protein belongs to the universal ribosomal protein uS3 family. Part of the 30S ribosomal subunit. Forms a tight complex with proteins S10 and S14.

Binds the lower part of the 30S subunit head. Binds mRNA in the 70S ribosome, positioning it for translation. The protein is Small ribosomal subunit protein uS3 of Alkalilimnicola ehrlichii (strain ATCC BAA-1101 / DSM 17681 / MLHE-1).